Here is a 78-residue protein sequence, read N- to C-terminus: Acyl carrier protein (78 aa).

The 76-residue stretch at serine 2 to leucine 77 folds into the Carrier domain. An O-(pantetheine 4'-phosphoryl)serine modification is found at serine 37.

It belongs to the acyl carrier protein (ACP) family. Post-translationally, 4'-phosphopantetheine is transferred from CoA to a specific serine of apo-ACP by AcpS. This modification is essential for activity because fatty acids are bound in thioester linkage to the sulfhydryl of the prosthetic group.

The protein resides in the cytoplasm. It functions in the pathway lipid metabolism; fatty acid biosynthesis. Its function is as follows. Carrier of the growing fatty acid chain in fatty acid biosynthesis. This Hydrogenovibrio crunogenus (strain DSM 25203 / XCL-2) (Thiomicrospira crunogena) protein is Acyl carrier protein.